The chain runs to 840 residues: Protein translocase subunit SecA (840 aa).

Residues Q85, 103 to 107 (GEGKT), and D492 contribute to the ATP site. The tract at residues 787 to 821 (QRERVAKETGASHGGDSQEIKKKPVKKEPKVGRND) is disordered. A compositionally biased stretch (basic and acidic residues) spans 802-819 (DSQEIKKKPVKKEPKVGR). Residues C823, C825, C834, and C835 each contribute to the Zn(2+) site.

It belongs to the SecA family. In terms of assembly, monomer and homodimer. Part of the essential Sec protein translocation apparatus which comprises SecA, SecYEG and auxiliary proteins SecDF. Other proteins may also be involved. Zn(2+) serves as cofactor.

The protein resides in the cell membrane. Its subcellular location is the cytoplasm. The catalysed reaction is ATP + H2O + cellular proteinSide 1 = ADP + phosphate + cellular proteinSide 2.. Part of the Sec protein translocase complex. Interacts with the SecYEG preprotein conducting channel. Has a central role in coupling the hydrolysis of ATP to the transfer of proteins into and across the cell membrane, serving as an ATP-driven molecular motor driving the stepwise translocation of polypeptide chains across the membrane. In Clostridium perfringens (strain 13 / Type A), this protein is Protein translocase subunit SecA.